A 532-amino-acid polypeptide reads, in one-letter code: Telomerase Cajal body protein 1 (532 aa).

Positions 1-53 (MKTSEERLLAPDSLPPDLAPAPVPQGSPAEKNTDFEPVPPPCGGDDQPQLATD) are disordered. Positions 13–25 (SLPPDLAPAPVPQ) are enriched in pro residues. A phosphoserine mark is found at Ser-27, Ser-61, and Ser-83. The segment at 80-122 (SELSPGIEEQDVSEHASLPGEETNLPELESGEATEGVSEERAE) is disordered. WD repeat units lie at residues 151-190 (RSEN…YSEQ), 206-251 (EGDT…LRAS), 256-297 (NHLD…RDCE), 307-348 (GQSG…ALLG), 349-389 (GHQG…HLLW), and 395-434 (VTTN…SDDS). A Phosphothreonine modification is found at Thr-474. A Phosphoserine modification is found at Ser-476. The disordered stretch occupies residues 510–532 (DPSSPVDDQDEKGQRRTEAVGMS). A compositionally biased stretch (basic and acidic residues) spans 520 to 532 (EKGQRRTEAVGMS).

The protein belongs to the TCAB1 family. As to quaternary structure, component of the telomerase holoenzyme complex composed of one molecule of TERT, one molecule of WRAP53/TCAB1, two molecules of H/ACA ribonucleoprotein complex subunits DKC1, NOP10, NHP2 and GAR1, and a telomerase RNA template component (TERC). The telomerase holoenzyme complex is associated with TEP1, SMG6/EST1A and POT1. Interacts with the chaperonin-containing T-complex (TRiC) complex; which mediates the folding of WRAP53/TCAB1. Interacts with COIL. Interacts with SMN1. Interacts with RNF8. Interacts with histone H2AX. Post-translationally, phosphorylated at Ser-61 by ATM in response to DNA damage, promoting its interaction with histone H2AX and localization to sites of DNA double-strand breaks.

The protein resides in the nucleus. The protein localises to the cajal body. Its subcellular location is the chromosome. It localises to the telomere. In terms of biological role, RNA chaperone that plays a key role in telomere maintenance and RNA localization to Cajal bodies. Specifically recognizes and binds the Cajal body box (CAB box) present in both small Cajal body RNAs (scaRNAs) and telomerase RNA template component (TERC). Essential component of the telomerase holoenzyme complex, a ribonucleoprotein complex essential for the replication of chromosome termini that elongates telomeres in most eukaryotes. In the telomerase holoenzyme complex, required to stimulate the catalytic activity of the complex. Acts by specifically binding the CAB box of the TERC RNA and controlling the folding of the CR4/CR5 region of the TERC RNA, a critical step for telomerase activity. In addition, also controls telomerase holoenzyme complex localization to Cajal body. During S phase, required for delivery of TERC to telomeres during S phase and for telomerase activity. In addition to its role in telomere maintenance, also required for Cajal body formation, probably by mediating localization of scaRNAs to Cajal bodies. Also plays a role in DNA repair: phosphorylated by ATM in response to DNA damage and relocalizes to sites of DNA double-strand breaks to promote the repair of DNA double-strand breaks. Acts by recruiting the ubiquitin ligase RNF8 to DNA breaks and promote both homologous recombination (HR) and non-homologous end joining (NHEJ). The protein is Telomerase Cajal body protein 1 of Mus musculus (Mouse).